A 673-amino-acid polypeptide reads, in one-letter code: DNA ligase (673 aa).

NAD(+) contacts are provided by residues 33–37, 82–83, and Glu-114; these read DAEYD and SL. Lys-116 functions as the N6-AMP-lysine intermediate in the catalytic mechanism. The NAD(+) site is built by Arg-137, Glu-174, Lys-291, and Lys-315. The Zn(2+) site is built by Cys-409, Cys-412, Cys-427, and Cys-433. The BRCT domain occupies 592–673; the sequence is AQEQPLAGLV…LINLLEQHNG (82 aa).

It belongs to the NAD-dependent DNA ligase family. LigA subfamily. The cofactor is Mg(2+). Mn(2+) serves as cofactor.

The catalysed reaction is NAD(+) + (deoxyribonucleotide)n-3'-hydroxyl + 5'-phospho-(deoxyribonucleotide)m = (deoxyribonucleotide)n+m + AMP + beta-nicotinamide D-nucleotide.. In terms of biological role, DNA ligase that catalyzes the formation of phosphodiester linkages between 5'-phosphoryl and 3'-hydroxyl groups in double-stranded DNA using NAD as a coenzyme and as the energy source for the reaction. It is essential for DNA replication and repair of damaged DNA. The sequence is that of DNA ligase from Pseudoalteromonas translucida (strain TAC 125).